We begin with the raw amino-acid sequence, 223 residues long: Deoxyribose-phosphate aldolase (223 aa).

The active-site Proton donor/acceptor is the aspartate 89. Lysine 152 acts as the Schiff-base intermediate with acetaldehyde in catalysis. Lysine 181 acts as the Proton donor/acceptor in catalysis.

It belongs to the DeoC/FbaB aldolase family. DeoC type 1 subfamily.

It localises to the cytoplasm. The catalysed reaction is 2-deoxy-D-ribose 5-phosphate = D-glyceraldehyde 3-phosphate + acetaldehyde. Its pathway is carbohydrate degradation; 2-deoxy-D-ribose 1-phosphate degradation; D-glyceraldehyde 3-phosphate and acetaldehyde from 2-deoxy-alpha-D-ribose 1-phosphate: step 2/2. Functionally, catalyzes a reversible aldol reaction between acetaldehyde and D-glyceraldehyde 3-phosphate to generate 2-deoxy-D-ribose 5-phosphate. The polypeptide is Deoxyribose-phosphate aldolase (Listeria welshimeri serovar 6b (strain ATCC 35897 / DSM 20650 / CCUG 15529 / CIP 8149 / NCTC 11857 / SLCC 5334 / V8)).